A 216-amino-acid polypeptide reads, in one-letter code: U1 small nuclear ribonucleoprotein C (216 aa).

The segment at 4 to 36 (FFCDYCDVYLTHDSMSVRKAHNAGRNHLRNVVE) adopts a Matrin-type zinc-finger fold. Composition is skewed to pro residues over residues 68 to 80 (AMAPPGAFPPPFG), 87 to 198 (QLPP…PAPP), and 206 to 216 (PGPPPGLSEKR). Positions 68–216 (AMAPPGAFPP…GPPPGLSEKR (149 aa)) are disordered.

Belongs to the U1 small nuclear ribonucleoprotein C family. As to quaternary structure, U1 snRNP is composed of the 7 core Sm proteins B/B', D1, D2, D3, E, F and G that assemble in a heptameric protein ring on the Sm site of the small nuclear RNA to form the core snRNP, and at least 3 U1 snRNP-specific proteins U1-70K, U1-A and U1-C. U1-C interacts with U1 snRNA and the 5' splice-site region of the pre-mRNA.

It is found in the nucleus. Functionally, component of the spliceosomal U1 snRNP, which is essential for recognition of the pre-mRNA 5' splice-site and the subsequent assembly of the spliceosome. U1-C is directly involved in initial 5' splice-site recognition for both constitutive and regulated alternative splicing. The interaction with the 5' splice-site seems to precede base-pairing between the pre-mRNA and the U1 snRNA. Stimulates commitment or early (E) complex formation by stabilizing the base pairing of the 5' end of the U1 snRNA and the 5' splice-site region. The protein is U1 small nuclear ribonucleoprotein C of Aspergillus fumigatus (strain ATCC MYA-4609 / CBS 101355 / FGSC A1100 / Af293) (Neosartorya fumigata).